The sequence spans 424 residues: Appressorium protein ROW1 (424 aa).

The first 21 residues, 1-21, serve as a signal peptide directing secretion; the sequence is MTKLTLTVALVSALLASGASA. Disordered regions lie at residues 19–54, 69–90, 278–304, and 327–398; these read ASAQQPTGTGNGPDPRATTDLNRNQPTKSWTQWQPK, ANRIESGEGGQPGGEPQSGYNT, SGSTFRQGDPVTPPAHPAPSSSQCSSV, and SSSA…TQGA. Over 22 to 403 the chain is Extracellular; it reads QQPTGTGNGP…NTQGAASSAS (382 aa). A compositionally biased stretch (polar residues) spans 37 to 54; sequence TDLNRNQPTKSWTQWQPK. Composition is skewed to low complexity over residues 295–304 and 327–347; these read APSSSQCSSV and SSSAASSAATDSSASTNSASS. Over residues 362-382 the composition is skewed to gly residues; the sequence is SGTGSGSGSGSGSGSGSGSGS. The span at 383 to 398 shows a compositional bias: low complexity; that stretch reads SSGSSSSGSSSNTQGA. Residues 404 to 424 traverse the membrane as a helical segment; that stretch reads SLTISVGLAGLVAIGAAAFAL.

It localises to the cell membrane. The protein localises to the secreted. In terms of biological role, plays a role in the formation of the appressorium, a specialized infection structure with the purpose of penetrating the host surface, and is required for proper remodeling of the appressorium wall and vesicle secretion. This is Appressorium protein ROW1 from Mycosarcoma maydis (Corn smut fungus).